The following is a 611-amino-acid chain: Oligoendopeptidase F homolog (611 aa).

Position 384 (histidine 384) interacts with Zn(2+). Glutamate 385 is a catalytic residue. 2 residues coordinate Zn(2+): histidine 388 and histidine 391.

Belongs to the peptidase M3B family. Zn(2+) serves as cofactor.

The sequence is that of Oligoendopeptidase F homolog (pepF) from Mycoplasma pneumoniae (strain ATCC 29342 / M129 / Subtype 1) (Mycoplasmoides pneumoniae).